The chain runs to 343 residues: Biotin synthase (343 aa).

One can recognise a Radical SAM core domain in the interval 36–254; that stretch reads NTIQISTLLS…IAVARIMMPK (219 aa). Residues C51, C55, and C58 each coordinate [4Fe-4S] cluster. Residues C95, C126, C186, and R258 each contribute to the [2Fe-2S] cluster site.

This sequence belongs to the radical SAM superfamily. Biotin synthase family. Homodimer. It depends on [4Fe-4S] cluster as a cofactor. [2Fe-2S] cluster is required as a cofactor.

The enzyme catalyses (4R,5S)-dethiobiotin + (sulfur carrier)-SH + 2 reduced [2Fe-2S]-[ferredoxin] + 2 S-adenosyl-L-methionine = (sulfur carrier)-H + biotin + 2 5'-deoxyadenosine + 2 L-methionine + 2 oxidized [2Fe-2S]-[ferredoxin]. The protein operates within cofactor biosynthesis; biotin biosynthesis; biotin from 7,8-diaminononanoate: step 2/2. In terms of biological role, catalyzes the conversion of dethiobiotin (DTB) to biotin by the insertion of a sulfur atom into dethiobiotin via a radical-based mechanism. The chain is Biotin synthase from Buchnera aphidicola subsp. Acyrthosiphon pisum (strain 5A).